The following is a 1544-amino-acid chain: GATOR complex protein Iml1 (1544 aa).

Disordered stretches follow at residues 615 to 649 and 1037 to 1072; these read QAVP…CENG and RRHS…EKRP. 2 stretches are compositionally biased toward polar residues: residues 623-639 and 1041-1057; these read QAGQ…NNNN and TSII…TNSP. Positions 1058–1072 are enriched in basic and acidic residues; the sequence is FRERVGSNRLPEKRP.

This sequence belongs to the IML1 family. In terms of assembly, component of the GATOR complex consisting of mio, Nup44A/Seh1, Im11, Nplr3, Nplr2, Wdr24, Wdr59 and Sec13. Within the GATOR complex, probable component of the GATOR1 subcomplex which is likely composed of Iml1, Nplr2 and Nplr3.

Functionally, an essential component of the GATOR subcomplex GATOR1 which functions as an inhibitor of the amino acid-sensing branch of the TORC1 signaling pathway. The two GATOR subcomplexes, GATOR1 and GATOR2, regulate the TORC1 pathway in order to mediate metabolic homeostasis, female gametogenesis and the response to amino acid limitation and complete starvation. The function of GATOR1 in negatively regulating the TORC1 pathway is essential for maintaining baseline levels of TORC1 activity under nutrient rich conditions, and for promoting survival during amino acid or complete starvation by inhibiting TORC1-dependent cell growth and promoting catabolic metabolism and autophagy. GATOR1 and GATOR2 act at different stages of oogenesis to regulate TORC1 in order to control meiotic entry and promote oocyte growth and development. After exactly four mitotic cyst divisions, the GATOR1 complex members (Iml1, Nprl2 and Nprl3) down-regulate TORC1 to slow cellular metabolism and promote the mitotic/meiotic transition. At later stages of oogenesis, the mio and Nup44A components of the GATOR2 complex inhibit GATOR1 and thus activate TORC1 to promote meiotic progression, and drive oocyte growth and development. The sequence is that of GATOR complex protein Iml1 from Drosophila melanogaster (Fruit fly).